The following is a 122-amino-acid chain: Acidic phospholipase A2 BlatPLA2 (122 aa).

7 disulfides stabilise this stretch: C26-C115, C28-C44, C43-C95, C49-C122, C50-C88, C57-C81, and C75-C86. Y27, G29, and G31 together coordinate Ca(2+). The active site involves H47. A Ca(2+)-binding site is contributed by D48. The active site involves D89.

This sequence belongs to the phospholipase A2 family. Group II subfamily. D49 sub-subfamily. As to quaternary structure, monomer. Ca(2+) serves as cofactor. In terms of tissue distribution, expressed by the venom gland.

The protein localises to the secreted. The catalysed reaction is a 1,2-diacyl-sn-glycero-3-phosphocholine + H2O = a 1-acyl-sn-glycero-3-phosphocholine + a fatty acid + H(+). Functionally, acidic phospholipase A2 (PLA2) that only causes a mild edema, when subcutaneously injected in the mice foot. PLA2 catalyzes the calcium-dependent hydrolysis of the 2-acyl groups in 3-sn-phosphoglycerides. The polypeptide is Acidic phospholipase A2 BlatPLA2 (Bothriechis lateralis (Side-striped palm pitviper)).